A 441-amino-acid polypeptide reads, in one-letter code: MVHIKKGELTQEEKELLEVIGKGTVQEAGTLLSSKNVRVNCLDENGMTPLMHAAYKGKLDMCKLLLRHGADVNCHQHEHGYTALMFAALSGNKDITWVMLEAGAETDVVNSVGRTAAQMAAFVGQHDCVTIINNFFPRERLDYYTKPQGLDKEPKLPPKLAGPLHKIITTTNLHPVKIVMLVNENPLLTEEAALNKCYRVMDLICEKCMKQRDMNEVLAMKMHYISCIFQKCINFLKDGENKLDTLIKSLLKGRASDGFPVYQEKIIRESIRKFPYCEATLLQQLVRSIAPVEIGSDPTAFSVLTQAITGQVGFVDVEFCTTCGEKGASKRCSVCKMVIYCDQTCQKTHWFTHKKICKNLKDIYEKQQLEAAKEKRQEENHGKLDVNSNCVNEEQPEAEVGISQKDSNPEDSGEGKKESLESEAELEGLQDAPAGPQVSEE.

ANK repeat units lie at residues 45–74 (NGMT…DVNC), 79–108 (HGYT…ETDV), and 159–188 (KLAG…NPLL). Positions 320, 323, 332, 335, 341, 345, 353, and 357 each coordinate Zn(2+). The MYND-type zinc-finger motif lies at 320–357 (CTTCGEKGASKRCSVCKMVIYCDQTCQKTHWFTHKKIC). Positions 374–384 (EKRQEENHGKL) are enriched in basic and acidic residues. Residues 374–441 (EKRQEENHGK…APAGPQVSEE (68 aa)) form a disordered region.

In terms of assembly, interacts with the retinal-specific guanylyl cyclase GC1.

Its subcellular location is the cell projection. It is found in the cilium. Its function is as follows. May be involved in the trafficking of signaling proteins to the cilia. This Homo sapiens (Human) protein is Ankyrin repeat and MYND domain-containing protein 2 (ANKMY2).